Consider the following 371-residue polypeptide: Neuropeptide S receptor (371 aa).

Over residues 1–21 (MPANFTEGSFDSSGTGQTLDS) the composition is skewed to polar residues. The tract at residues 1–22 (MPANFTEGSFDSSGTGQTLDSS) is disordered. At 1-52 (MPANFTEGSFDSSGTGQTLDSSPVACTETVTFTEVVEGKEWGSFYYSFKTEQ) the chain is on the extracellular side. The N-linked (GlcNAc...) asparagine glycan is linked to asparagine 4. Residues 53 to 73 (LITLWVLFVFTIVGNSVVLFS) traverse the membrane as a helical segment. At 74-82 (TWRRKKKSR) the chain is on the cytoplasmic side. Residues 83–103 (MTFFVTQLAITDSFTGLVNIL) form a helical membrane-spanning segment. The Extracellular portion of the chain corresponds to 104 to 123 (TDINWRFTGDFTAPDLVCRV). The cysteines at positions 121 and 197 are disulfide-linked. Residues 124 to 144 (VRYLQVVLLYASTYVLVSLSI) form a helical membrane-spanning segment. The Cytoplasmic segment spans residues 145 to 164 (DRYHAIVYPMKFLQGEKQAR). Residues 165-185 (VLIVIAWSLSFLFSIPTLIIF) form a helical membrane-spanning segment. At 186–212 (GKRTLSNGEVQCWALWPDDSYWTPYMT) the chain is on the extracellular side. A helical transmembrane segment spans residues 213-233 (IVAFLVYFIPLTIISIMYGIV). Topologically, residues 234–275 (IRTIWIKSKTYETVISNCSDGKLCSSYNRGLISKAKIKAIKY) are cytoplasmic. A helical transmembrane segment spans residues 276-296 (SIIIILAFICCWSPYFLFDIL). Residues 297-312 (DNFNLLPDTQERFYAS) are Extracellular-facing. Residues 313–333 (VIIQNLPALNSAINPLIYCVF) form a helical membrane-spanning segment. Topologically, residues 334–371 (SSSISFPCREQRSQDSRMTFRERTERHEMQILSKPEFI) are cytoplasmic.

The protein belongs to the G-protein coupled receptor 1 family. Vasopressin/oxytocin receptor subfamily. In terms of tissue distribution, isoform 4 is ubiquitous; it is detected in glandular epithelia of bronchus, stomach, small intestine, colon, uterus, esophagus, spleen, kidney, pancreas, prostate and breast. Isoform 1 is detected in uterus, colon and prostate, and in the smooth muscle cell layer in bronchial and arterial walls (at protein level). Isoform 1 is predominantly expressed in smooth muscle. Isoform 4 is predominantly expressed in epithelial cells. In bronchial biopsies, it is expressed in smooth muscle cells of asthma patients, but not in control patients; whereas in epithelial cells, its expression is consistently stronger in asthma patients.

The protein localises to the cell membrane. Its subcellular location is the cytoplasm. Its function is as follows. G-protein coupled receptor for neuropeptide S (NPS). Promotes mobilization of intracellular Ca(2+) stores. Inhibits cell growth in response to NPS binding. Involved in pathogenesis of asthma and other IgE-mediated diseases. This Homo sapiens (Human) protein is Neuropeptide S receptor (NPSR1).